Here is a 218-residue protein sequence, read N- to C-terminus: Octanoyltransferase (218 aa).

Residues 30–217 (GEAGELVWLV…SFARNFPPLA (188 aa)) form the BPL/LPL catalytic domain. Substrate-binding positions include 68 to 75 (RGGQYTYH), 148 to 150 (AIG), and 161 to 163 (GIA). Cys179 (acyl-thioester intermediate) is an active-site residue.

It belongs to the LipB family.

Its subcellular location is the cytoplasm. It carries out the reaction octanoyl-[ACP] + L-lysyl-[protein] = N(6)-octanoyl-L-lysyl-[protein] + holo-[ACP] + H(+). It participates in protein modification; protein lipoylation via endogenous pathway; protein N(6)-(lipoyl)lysine from octanoyl-[acyl-carrier-protein]: step 1/2. Its function is as follows. Catalyzes the transfer of endogenously produced octanoic acid from octanoyl-acyl-carrier-protein onto the lipoyl domains of lipoate-dependent enzymes. Lipoyl-ACP can also act as a substrate although octanoyl-ACP is likely to be the physiological substrate. This is Octanoyltransferase from Paracoccus denitrificans (strain Pd 1222).